Here is an 86-residue protein sequence, read N- to C-terminus: DNA-directed RNA polymerase subunit omega (86 aa).

This sequence belongs to the RNA polymerase subunit omega family. As to quaternary structure, the RNAP catalytic core consists of 2 alpha, 1 beta, 1 beta' and 1 omega subunit. When a sigma factor is associated with the core the holoenzyme is formed, which can initiate transcription.

The catalysed reaction is RNA(n) + a ribonucleoside 5'-triphosphate = RNA(n+1) + diphosphate. In terms of biological role, promotes RNA polymerase assembly. Latches the N- and C-terminal regions of the beta' subunit thereby facilitating its interaction with the beta and alpha subunits. This is DNA-directed RNA polymerase subunit omega from Psychrobacter arcticus (strain DSM 17307 / VKM B-2377 / 273-4).